Here is a 65-residue protein sequence, read N- to C-terminus: Large ribosomal subunit protein bL32 (65 aa).

This sequence belongs to the bacterial ribosomal protein bL32 family.

This is Large ribosomal subunit protein bL32 from Phytoplasma australiense.